A 129-amino-acid chain; its full sequence is MTTDVIADMLTRIRNANQRYLKTVSVPSSKVKLEIARILKEEGFISDFTVEGDVKKTINIELKYQGKTRVIQGLKKISKPGLRVYAQANEIPQVLNGLGISIVSTSQGIMTGKKARLANAGGEVLAFIW.

It belongs to the universal ribosomal protein uS8 family. In terms of assembly, part of the 30S ribosomal subunit. Contacts proteins S5 and S12.

One of the primary rRNA binding proteins, it binds directly to 16S rRNA central domain where it helps coordinate assembly of the platform of the 30S subunit. In Mycoplasma capricolum subsp. capricolum (strain California kid / ATCC 27343 / NCTC 10154), this protein is Small ribosomal subunit protein uS8.